The following is a 3681-amino-acid chain: E3 ubiquitin-protein ligase UPL1 (3681 aa).

Basic and acidic residues predominate over residues 882 to 891; the sequence is DEKKSVDRGS. The disordered stretch occupies residues 882-912; that stretch reads DEKKSVDRGSDNSVSASSSTAERESDEDSSN. The segment covering 892-901 has biased composition (low complexity); it reads DNSVSASSST. Residues 1269 to 1310 form the UBA domain; sequence QLDESIVGMIVEMGFSRSRAEIALRRVGTNSVEMAMDWLFTN. The region spanning 1316–1335 is the UIM domain; it reads QEDDELAQALALSLGNSSET. 10 disordered regions span residues 1332-1358, 1768-1802, 2015-2094, 2125-2151, 2253-2287, 2401-2435, 2483-2505, 2537-2606, 2975-3003, and 3228-3254; these read SSET…KEPP, MEVD…KAEI, EQLK…MRIE, ENRA…EDAD, RQTG…TASV, NTTE…QSEE, PLPL…DGAP, IAPP…APEV, SPSS…DAES, and TAGE…KTDG. 3 stretches are compositionally biased toward basic and acidic residues: residues 1336-1345, 1782-1802, and 2017-2037; these read PKLEDTEKPV, KVGE…KAEI, and LKSE…HDSH. The segment covering 2038–2087 has biased composition (polar residues); it reads GNSTETEADELNQNNSSLQQVTDAAGNGQEQAQVSSQSAGERGSSQTQAM. The span at 2130 to 2151 shows a compositional bias: acidic residues; sequence DDVDDDMGDEGEDDEGDDEDAD. The span at 2253 to 2265 shows a compositional bias: basic and acidic residues; the sequence is RQTGRSSLDRSGS. A compositionally biased stretch (polar residues) spans 2277–2287; that stretch reads RPSQTGNTASV. S2598 is modified (phosphoserine). A compositionally biased stretch (basic and acidic residues) spans 2982-3002; sequence EKLENKPVGEEASSETRKDAE. The span at 3237–3247 shows a compositional bias: polar residues; it reads AHGSSSKTSVD. Residues 3340-3681 enclose the HECT domain; the sequence is SPQDLKGRLN…HEASEGFGFA (342 aa). Residue C3648 is the Glycyl thioester intermediate of the active site.

This sequence belongs to the UPL family. TOM1/PTR1 subfamily. As to expression, widely expressed. Expressed in root, stem, cauline and rosette leaf, seedling and flower (at protein level).

It catalyses the reaction S-ubiquitinyl-[E2 ubiquitin-conjugating enzyme]-L-cysteine + [acceptor protein]-L-lysine = [E2 ubiquitin-conjugating enzyme]-L-cysteine + N(6)-ubiquitinyl-[acceptor protein]-L-lysine.. The protein operates within protein modification; protein ubiquitination. Probable E3 ubiquitin-protein ligase which mediates ubiquitination and subsequent proteasomal degradation of target proteins. The protein is E3 ubiquitin-protein ligase UPL1 (UPL1) of Arabidopsis thaliana (Mouse-ear cress).